A 319-amino-acid chain; its full sequence is Acetyl-coenzyme A carboxylase carboxyl transferase subunit alpha (319 aa).

The 262-residue stretch at 35–296 folds into the CoA carboxyltransferase C-terminal domain; the sequence is DLDKEIEQLE…KDMLVKQLEE (262 aa).

The protein belongs to the AccA family. Acetyl-CoA carboxylase is a heterohexamer composed of biotin carboxyl carrier protein (AccB), biotin carboxylase (AccC) and two subunits each of ACCase subunit alpha (AccA) and ACCase subunit beta (AccD).

Its subcellular location is the cytoplasm. The catalysed reaction is N(6)-carboxybiotinyl-L-lysyl-[protein] + acetyl-CoA = N(6)-biotinyl-L-lysyl-[protein] + malonyl-CoA. It participates in lipid metabolism; malonyl-CoA biosynthesis; malonyl-CoA from acetyl-CoA: step 1/1. Component of the acetyl coenzyme A carboxylase (ACC) complex. First, biotin carboxylase catalyzes the carboxylation of biotin on its carrier protein (BCCP) and then the CO(2) group is transferred by the carboxyltransferase to acetyl-CoA to form malonyl-CoA. The sequence is that of Acetyl-coenzyme A carboxylase carboxyl transferase subunit alpha from Vibrio atlanticus (strain LGP32) (Vibrio splendidus (strain Mel32)).